The following is a 129-amino-acid chain: MAFPTTSAQQAETNRKILEEIQTKKQLLAGGIINLGLSPANQMPAPQLLGQPTTVNPDFQAGVGIATNATSTARSAFNPTSSTTLGFFIPQDSYFGNSFIPVLPRLEPLPSPATTPTTPNAPPSHNISK.

The disordered stretch occupies residues 105–129; the sequence is RLEPLPSPATTPTTPNAPPSHNISK.

This sequence belongs to the SOSS-C family.

The sequence is that of SOSS complex subunit C homolog from Drosophila erecta (Fruit fly).